We begin with the raw amino-acid sequence, 310 residues long: Porphobilinogen deaminase (310 aa).

Cysteine 242 is subject to S-(dipyrrolylmethanemethyl)cysteine.

The protein belongs to the HMBS family. Monomer. Requires dipyrromethane as cofactor.

The catalysed reaction is 4 porphobilinogen + H2O = hydroxymethylbilane + 4 NH4(+). It functions in the pathway porphyrin-containing compound metabolism; protoporphyrin-IX biosynthesis; coproporphyrinogen-III from 5-aminolevulinate: step 2/4. In terms of biological role, tetrapolymerization of the monopyrrole PBG into the hydroxymethylbilane pre-uroporphyrinogen in several discrete steps. The protein is Porphobilinogen deaminase of Shewanella baltica (strain OS195).